We begin with the raw amino-acid sequence, 296 residues long: NAD kinase (296 aa).

The Proton acceptor role is filled by aspartate 72. Residues 72–73 (DG), 146–147 (ND), arginine 157, lysine 174, aspartate 176, 187–192 (TAYALS), and glutamine 247 each bind NAD(+).

The protein belongs to the NAD kinase family. The cofactor is a divalent metal cation.

The protein resides in the cytoplasm. The enzyme catalyses NAD(+) + ATP = ADP + NADP(+) + H(+). Functionally, involved in the regulation of the intracellular balance of NAD and NADP, and is a key enzyme in the biosynthesis of NADP. Catalyzes specifically the phosphorylation on 2'-hydroxyl of the adenosine moiety of NAD to yield NADP. The polypeptide is NAD kinase (Pseudomonas fluorescens (strain ATCC BAA-477 / NRRL B-23932 / Pf-5)).